Consider the following 338-residue polypeptide: Phosphate transport system permease protein PstC 1 (338 aa).

The next 8 helical transmembrane spans lie at 19-39 (GGIG…VLVI), 93-113 (TSAI…LVIV), 123-143 (AVGI…GLWG), 144-164 (AMTF…HNAP), 181-201 (GMLV…ATTT), 232-252 (LPWV…RALG), 254-274 (TMAV…NIYA), and 295-315 (TNFA…ITLL). Positions 87 to 320 (IVGTLATSAI…VITLLTNVAA (234 aa)) constitute an ABC transmembrane type-1 domain.

The protein belongs to the binding-protein-dependent transport system permease family. CysTW subfamily.

The protein resides in the cell membrane. Its function is as follows. Part of the binding-protein-dependent transport system for phosphate; probably responsible for the translocation of the substrate across the membrane. This chain is Phosphate transport system permease protein PstC 1 (pstC1), found in Mycobacterium bovis (strain ATCC BAA-935 / AF2122/97).